We begin with the raw amino-acid sequence, 370 residues long: tRNA-specific 2-thiouridylase MnmA (370 aa).

ATP-binding positions include 11–18 (AMSGGVDS) and M37. The interval 99–101 (NPD) is interaction with target base in tRNA. C104 functions as the Nucleophile in the catalytic mechanism. Residues C104 and C201 are joined by a disulfide bond. Residue G129 coordinates ATP. Residues 151–153 (KDQ) are interaction with tRNA. C201 (cysteine persulfide intermediate) is an active-site residue. The interaction with tRNA stretch occupies residues 313 to 314 (RY).

The protein belongs to the MnmA/TRMU family. In terms of assembly, interacts with TusE.

It localises to the cytoplasm. The enzyme catalyses S-sulfanyl-L-cysteinyl-[protein] + uridine(34) in tRNA + AH2 + ATP = 2-thiouridine(34) in tRNA + L-cysteinyl-[protein] + A + AMP + diphosphate + H(+). In terms of biological role, catalyzes the 2-thiolation of uridine at the wobble position (U34) of tRNA(Lys), tRNA(Glu) and tRNA(Gln), leading to the formation of s(2)U34, the first step of tRNA-mnm(5)s(2)U34 synthesis. Sulfur is provided by IscS, via a sulfur-relay system. Binds ATP and its substrate tRNAs. The sequence is that of tRNA-specific 2-thiouridylase MnmA from Buchnera aphidicola subsp. Baizongia pistaciae (strain Bp).